A 139-amino-acid polypeptide reads, in one-letter code: Large ribosomal subunit protein uL13 (139 aa).

It belongs to the universal ribosomal protein uL13 family. Part of the 50S ribosomal subunit.

Its function is as follows. This protein is one of the early assembly proteins of the 50S ribosomal subunit, although it is not seen to bind rRNA by itself. It is important during the early stages of 50S assembly. The polypeptide is Large ribosomal subunit protein uL13 (Aliarcobacter butzleri (strain RM4018) (Arcobacter butzleri)).